We begin with the raw amino-acid sequence, 433 residues long: Probable M18 family aminopeptidase 2 (433 aa).

3 residues coordinate Zn(2+): His84, His161, and His409.

It belongs to the peptidase M18 family. It depends on Zn(2+) as a cofactor.

The polypeptide is Probable M18 family aminopeptidase 2 (apeB) (Clostridium acetobutylicum (strain ATCC 824 / DSM 792 / JCM 1419 / IAM 19013 / LMG 5710 / NBRC 13948 / NRRL B-527 / VKM B-1787 / 2291 / W)).